Consider the following 337-residue polypeptide: UPF0284 protein AF_0276 (337 aa).

This sequence belongs to the UPF0284 family.

This is UPF0284 protein AF_0276 from Archaeoglobus fulgidus (strain ATCC 49558 / DSM 4304 / JCM 9628 / NBRC 100126 / VC-16).